The chain runs to 394 residues: S-adenosylmethionine synthase (394 aa).

An ATP-binding site is contributed by His-15. Asp-17 provides a ligand contact to Mg(2+). Glu-43 is a binding site for K(+). Residues Glu-56 and Gln-99 each contribute to the L-methionine site. Residues 99–109 are flexible loop; it reads QSPDIALGVNK. Residues 173 to 175, 239 to 240, Asp-248, 254 to 255, Ala-271, and Lys-275 each bind ATP; these read DGK, RF, and RK. L-methionine is bound at residue Asp-248. Lys-279 provides a ligand contact to L-methionine.

The protein belongs to the AdoMet synthase family. As to quaternary structure, homotetramer; dimer of dimers. The cofactor is Mg(2+). It depends on K(+) as a cofactor.

The protein localises to the cytoplasm. The catalysed reaction is L-methionine + ATP + H2O = S-adenosyl-L-methionine + phosphate + diphosphate. Its pathway is amino-acid biosynthesis; S-adenosyl-L-methionine biosynthesis; S-adenosyl-L-methionine from L-methionine: step 1/1. Catalyzes the formation of S-adenosylmethionine (AdoMet) from methionine and ATP. The overall synthetic reaction is composed of two sequential steps, AdoMet formation and the subsequent tripolyphosphate hydrolysis which occurs prior to release of AdoMet from the enzyme. In Kosmotoga olearia (strain ATCC BAA-1733 / DSM 21960 / TBF 19.5.1), this protein is S-adenosylmethionine synthase.